Reading from the N-terminus, the 118-residue chain is Large ribosomal subunit protein bL20 (118 aa).

It belongs to the bacterial ribosomal protein bL20 family.

Functionally, binds directly to 23S ribosomal RNA and is necessary for the in vitro assembly process of the 50S ribosomal subunit. It is not involved in the protein synthesizing functions of that subunit. This chain is Large ribosomal subunit protein bL20, found in Klebsiella pneumoniae (strain 342).